Reading from the N-terminus, the 29-residue chain is Dander allergen Equ c 2.0101 (29 aa).

It belongs to the calycin superfamily. Lipocalin family.

It is found in the secreted. In Equus caballus (Horse), this protein is Dander allergen Equ c 2.0101.